Here is a 148-residue protein sequence, read N- to C-terminus: uncharacterized protein (148 aa).

The disordered stretch occupies residues 83–148 (QPAVIPPVKA…TKKSNKKTRS (66 aa)). Composition is skewed to basic residues over residues 92-103 (AKPKATKKKTPV) and 113-124 (KQTKPKQSKPKS).

This is an uncharacterized protein from Mycoplasma genitalium (strain ATCC 33530 / DSM 19775 / NCTC 10195 / G37) (Mycoplasmoides genitalium).